A 572-amino-acid chain; its full sequence is 2-isopropylmalate synthase (572 aa).

In terms of domain architecture, Pyruvate carboxyltransferase spans 31–305 (PIWMSTDLRD…DPGLDFSNIN (275 aa)). Residues D40, H244, H246, and N280 each contribute to the Mg(2+) site. Positions 437–572 (NTAPIHYVGH…MNDAAESVGV (136 aa)) are regulatory domain.

It belongs to the alpha-IPM synthase/homocitrate synthase family. LeuA type 2 subfamily. As to quaternary structure, homodimer. Mg(2+) is required as a cofactor.

The protein resides in the cytoplasm. The catalysed reaction is 3-methyl-2-oxobutanoate + acetyl-CoA + H2O = (2S)-2-isopropylmalate + CoA + H(+). It functions in the pathway amino-acid biosynthesis; L-leucine biosynthesis; L-leucine from 3-methyl-2-oxobutanoate: step 1/4. Its function is as follows. Catalyzes the condensation of the acetyl group of acetyl-CoA with 3-methyl-2-oxobutanoate (2-ketoisovalerate) to form 3-carboxy-3-hydroxy-4-methylpentanoate (2-isopropylmalate). This Paraburkholderia phytofirmans (strain DSM 17436 / LMG 22146 / PsJN) (Burkholderia phytofirmans) protein is 2-isopropylmalate synthase.